A 157-amino-acid polypeptide reads, in one-letter code: MLPEQGPQPSTMPLWCLLAACTSLPRQAATMLEEAASPNEAVHASTSGSGALTDQTFTDLSAAEASSEEVPDFMEVPHSVHHKINCFFYLEKQLCQLPSPLCLSSLLTLKLKTTVPAPGRWWSFQPHKAFPLLVGTPGSWQSTIDPAWAAPSQPSPG.

A signal peptide spans 1–30 (MLPEQGPQPSTMPLWCLLAACTSLPRQAAT).

The protein resides in the secreted. This is an uncharacterized protein from Homo sapiens (Human).